The chain runs to 59 residues: Large ribosomal subunit protein bL32c (59 aa).

Residues 37–59 are disordered; sequence SRSFSRGNEHPKPKGFSGQQANK.

Belongs to the bacterial ribosomal protein bL32 family.

The protein localises to the plastid. Its subcellular location is the chloroplast. The chain is Large ribosomal subunit protein bL32c (rpl32) from Zea mays (Maize).